The primary structure comprises 246 residues: Peptide methionine sulfoxide reductase (246 aa).

The Cysteine sulfenic acid (-SOH) intermediate role is filled by C48. A disulfide bond links C48 and C246.

Conjugated to URM1, a ubiquitin-like protein.

It carries out the reaction L-methionyl-[protein] + [thioredoxin]-disulfide + H2O = L-methionyl-(S)-S-oxide-[protein] + [thioredoxin]-dithiol. It catalyses the reaction [thioredoxin]-disulfide + L-methionine + H2O = L-methionine (S)-S-oxide + [thioredoxin]-dithiol. In terms of biological role, has an important function as a repair enzyme for proteins that have been inactivated by oxidation. Catalyzes the reduction of methionine sulfoxide in proteins to methionine. Does not catalyze the reverse reaction involving the oxidation of methionine residues. In Drosophila melanogaster (Fruit fly), this protein is Peptide methionine sulfoxide reductase.